Consider the following 293-residue polypeptide: Energy-coupling factor transporter ATP-binding protein EcfA2 (293 aa).

An ABC transporter domain is found at 3–246 (ITFQKVEHRY…ADELEKIGVD (244 aa)). Residue 40 to 47 (GHTGSGKS) participates in ATP binding.

Belongs to the ABC transporter superfamily. Energy-coupling factor EcfA family. As to quaternary structure, forms a stable energy-coupling factor (ECF) transporter complex composed of 2 membrane-embedded substrate-binding proteins (S component), 2 ATP-binding proteins (A component) and 2 transmembrane proteins (T component).

It localises to the cell membrane. ATP-binding (A) component of a common energy-coupling factor (ECF) ABC-transporter complex. Unlike classic ABC transporters this ECF transporter provides the energy necessary to transport a number of different substrates. This is Energy-coupling factor transporter ATP-binding protein EcfA2 from Bacillus anthracis.